The chain runs to 184 residues: Ribosome maturation factor RimM (184 aa).

Residues 105 to 184 (EDEFYWRELF…RIEVDWDPAF (80 aa)) enclose the PRC barrel domain.

Belongs to the RimM family. In terms of assembly, binds ribosomal protein uS19.

The protein resides in the cytoplasm. Its function is as follows. An accessory protein needed during the final step in the assembly of 30S ribosomal subunit, possibly for assembly of the head region. Essential for efficient processing of 16S rRNA. May be needed both before and after RbfA during the maturation of 16S rRNA. It has affinity for free ribosomal 30S subunits but not for 70S ribosomes. The protein is Ribosome maturation factor RimM of Vibrio cholerae serotype O1 (strain ATCC 39541 / Classical Ogawa 395 / O395).